The primary structure comprises 288 residues: Elongation factor Ts (288 aa).

The tract at residues 82-85 (TDFV) is involved in Mg(2+) ion dislocation from EF-Tu.

The protein belongs to the EF-Ts family.

It localises to the cytoplasm. Associates with the EF-Tu.GDP complex and induces the exchange of GDP to GTP. It remains bound to the aminoacyl-tRNA.EF-Tu.GTP complex up to the GTP hydrolysis stage on the ribosome. This is Elongation factor Ts from Chlorobium luteolum (strain DSM 273 / BCRC 81028 / 2530) (Pelodictyon luteolum).